A 219-amino-acid chain; its full sequence is ATP-dependent Clp protease proteolytic subunit 4 (219 aa).

Catalysis depends on serine 125, which acts as the Nucleophile. Histidine 150 is a catalytic residue.

The protein belongs to the peptidase S14 family. As to quaternary structure, fourteen ClpP subunits assemble into 2 heptameric rings which stack back to back to give a disk-like structure with a central cavity, resembling the structure of eukaryotic proteasomes.

It localises to the cytoplasm. The catalysed reaction is Hydrolysis of proteins to small peptides in the presence of ATP and magnesium. alpha-casein is the usual test substrate. In the absence of ATP, only oligopeptides shorter than five residues are hydrolyzed (such as succinyl-Leu-Tyr-|-NHMec, and Leu-Tyr-Leu-|-Tyr-Trp, in which cleavage of the -Tyr-|-Leu- and -Tyr-|-Trp bonds also occurs).. In terms of biological role, cleaves peptides in various proteins in a process that requires ATP hydrolysis. Has a chymotrypsin-like activity. Plays a major role in the degradation of misfolded proteins. The polypeptide is ATP-dependent Clp protease proteolytic subunit 4 (Prochlorococcus marinus (strain MIT 9312)).